The sequence spans 238 residues: Small ribosomal subunit protein uS2 (238 aa).

It belongs to the universal ribosomal protein uS2 family.

The protein is Small ribosomal subunit protein uS2 of Actinobacillus pleuropneumoniae serotype 5b (strain L20).